A 503-amino-acid chain; its full sequence is Aromatase (503 aa).

Helical transmembrane passes span 19 to 39 and 51 to 71; these read EVMPVATLPILLLTGFLFFVW and GYCMGIGPLISHLRFLWMGLG. The substrate-binding pocket stretch occupies residues 294 to 324; the sequence is ENVNQCILEMMIAAPDTLSVTVFFMLCLIAQ. Residues Asp-309 and Met-374 each coordinate substrate. Cys-437 serves as a coordination point for heme.

Belongs to the cytochrome P450 family. Heme serves as cofactor. Expressed in placenta. Highly expressed in follicles (0 hour:hCG), followed by a drop (12-24 hour:hCG) and by an increase (30-39 hour:hCG). Highly expressed in corpora lutea. Also expressed in granulosa cell layer. Not expressed in theca interna.

It is found in the endoplasmic reticulum membrane. Its subcellular location is the microsome membrane. It catalyses the reaction testosterone + 3 reduced [NADPH--hemoprotein reductase] + 3 O2 = 17beta-estradiol + formate + 3 oxidized [NADPH--hemoprotein reductase] + 4 H2O + 4 H(+). It carries out the reaction androst-4-ene-3,17-dione + 3 reduced [NADPH--hemoprotein reductase] + 3 O2 = estrone + formate + 3 oxidized [NADPH--hemoprotein reductase] + 4 H2O + 4 H(+). The enzyme catalyses androst-4-ene-3,17-dione + reduced [NADPH--hemoprotein reductase] + O2 = 19-hydroxyandrost-4-ene-3,17-dione + oxidized [NADPH--hemoprotein reductase] + H2O + H(+). The catalysed reaction is 19-hydroxyandrost-4-ene-3,17-dione + reduced [NADPH--hemoprotein reductase] + O2 = 19-oxo-androst-4-ene-3,17-dione + oxidized [NADPH--hemoprotein reductase] + 2 H2O + H(+). It catalyses the reaction 19-oxo-androst-4-ene-3,17-dione + reduced [NADPH--hemoprotein reductase] + O2 = estrone + formate + oxidized [NADPH--hemoprotein reductase] + H2O + 2 H(+). It carries out the reaction estrone + reduced [NADPH--hemoprotein reductase] + O2 = 2-hydroxyestrone + oxidized [NADPH--hemoprotein reductase] + H2O + H(+). The enzyme catalyses 17beta-hydroxy-5alpha-androstan-3-one + reduced [NADPH--hemoprotein reductase] + O2 = 17beta,19-dihydroxy-3-oxo-5alpha-androstanone + oxidized [NADPH--hemoprotein reductase] + H2O + H(+). The catalysed reaction is 17beta,19-dihydroxy-3-oxo-5alpha-androstanone + reduced [NADPH--hemoprotein reductase] + O2 = 17beta-hydroxy-3,19-dioxo-5alpha-androstanone + oxidized [NADPH--hemoprotein reductase] + 2 H2O + H(+). It catalyses the reaction 17beta-hydroxy-3,19-dioxo-5alpha-androstanone + reduced [NADPH--hemoprotein reductase] + O2 = 17beta-hydroxy-3-oxo-19-nor-5alpha-androst-1-ene + formate + oxidized [NADPH--hemoprotein reductase] + H2O + 2 H(+). Its pathway is steroid hormone biosynthesis. In terms of biological role, a cytochrome P450 monooxygenase that catalyzes the conversion of C19 androgens, androst-4-ene-3,17-dione (androstenedione) and testosterone to the C18 estrogens, estrone and estradiol, respectively. Catalyzes three successive oxidations of C19 androgens: two conventional oxidations at C19 yielding 19-hydroxy and 19-oxo/19-aldehyde derivatives, followed by a third oxidative aromatization step that involves C1-beta hydrogen abstraction combined with cleavage of the C10-C19 bond to yield a phenolic A ring and formic acid. Alternatively, the third oxidative reaction yields a 19-norsteroid and formic acid. Converts dihydrotestosterone to delta1,10-dehydro 19-nordihydrotestosterone and may play a role in homeostasis of this potent androgen. Also displays 2-hydroxylase activity toward estrone. Mechanistically, uses molecular oxygen inserting one oxygen atom into a substrate, and reducing the second into a water molecule, with two electrons provided by NADPH via cytochrome P450 reductase (CPR; NADPH-ferrihemoprotein reductase). The polypeptide is Aromatase (CYP19A1) (Equus caballus (Horse)).